Here is a 258-residue protein sequence, read N- to C-terminus: Putative [LysW]-aminoadipate/[LysW]-glutamate kinase (258 aa).

Substrate-binding positions include 33–34, Arg-60, and Asn-164; that span reads GG.

The protein belongs to the acetylglutamate kinase family. LysZ subfamily.

It is found in the cytoplasm. The enzyme catalyses [amino-group carrier protein]-C-terminal-N-(1,4-dicarboxybutan-1-yl)-L-glutamine + ATP = [amino-group carrier protein]-C-terminal-N-(1-carboxy-5-phosphooxy-5-oxopentan-1-yl)-L-glutamine + ADP. It catalyses the reaction [amino-group carrier protein]-C-terminal-gamma-(L-glutamyl)-L-glutamate + ATP = [amino-group carrier protein]-C-terminal-gamma-(5-phospho-L-glutamyl)-L-glutamate + ADP. The protein operates within amino-acid biosynthesis; L-lysine biosynthesis via AAA pathway; L-lysine from L-alpha-aminoadipate (Thermus route): step 2/5. It participates in amino-acid biosynthesis; L-arginine biosynthesis. Its function is as follows. Involved in both the arginine and lysine biosynthetic pathways. Phosphorylates the LysW-bound precursors glutamate (for arginine biosynthesis), respectively alpha-aminoadipate (for lysine biosynthesis). The polypeptide is Putative [LysW]-aminoadipate/[LysW]-glutamate kinase (Caldivirga maquilingensis (strain ATCC 700844 / DSM 13496 / JCM 10307 / IC-167)).